The following is a 285-amino-acid chain: Bifunctional protein FolD (285 aa).

NADP(+) contacts are provided by residues 166-168 (GAS) and Ile-232.

The protein belongs to the tetrahydrofolate dehydrogenase/cyclohydrolase family. In terms of assembly, homodimer.

It carries out the reaction (6R)-5,10-methylene-5,6,7,8-tetrahydrofolate + NADP(+) = (6R)-5,10-methenyltetrahydrofolate + NADPH. The enzyme catalyses (6R)-5,10-methenyltetrahydrofolate + H2O = (6R)-10-formyltetrahydrofolate + H(+). It participates in one-carbon metabolism; tetrahydrofolate interconversion. Catalyzes the oxidation of 5,10-methylenetetrahydrofolate to 5,10-methenyltetrahydrofolate and then the hydrolysis of 5,10-methenyltetrahydrofolate to 10-formyltetrahydrofolate. This is Bifunctional protein FolD from Baumannia cicadellinicola subsp. Homalodisca coagulata.